Here is a 625-residue protein sequence, read N- to C-terminus: Low affinity potassium transport system protein Kup (625 aa).

Helical transmembrane passes span 15 to 35 (TIFSTINVLHGLIAISPIYII), 58 to 78 (IIFWTLFFIIFLKYLILIVSI), 103 to 123 (FVIVILGLISMCLFFGDIIII), 140 to 160 (LSFEKFIFIISIAIFTFLFFI), 171 to 191 (IFSFLISIWFILVGLIGLKGI), 218 to 238 (FFVFGTLILLISISEILYINI), 251 to 271 (LFFVFPMIMINCFGQGSIILL), 282 to 302 (FLVPDWARFFTFTFAIIISII), 340 to 360 (IYIPCINWIFYLSAVIQISIF), 366 to 386 (LILIYGIGSIITMSLTTFFSL), 396 to 416 (FKILKITFLLTILILEFFIFI), and 422 to 442 (IICGGWFPIVFGIIFFTIMIT).

This sequence belongs to the HAK/KUP transporter (TC 2.A.72) family.

It is found in the cell membrane. It carries out the reaction K(+)(in) + H(+)(in) = K(+)(out) + H(+)(out). Its function is as follows. Responsible for the low-affinity transport of potassium into the cell. Likely operates as a K(+):H(+) symporter. The chain is Low affinity potassium transport system protein Kup from Wigglesworthia glossinidia brevipalpis.